Consider the following 709-residue polypeptide: MALDVLTNLNQVRNIGIMAHIDAGKTTTTERILFYTGKNYKIGETHEGASTMDFMAQEKERGITIQSAATTCFWNRQTHDPDEKFQINIIDTPGHVDFTAEVERSLRVLDGAVAVFDGKEGVEPQSETVWRQADKYGVPRICFINKMDKLGADFYYSVSTIKEKLGATPLVVQLPIGAENDFSGVVDLIRMKAYVWNDIKDDQGAHYDTVEIPDDLKERAEQYRSELLDQVAETDEELLEKYLENGDLSEQEIRGAIRQLTIAREAYPVLCGSAFKDKGVQPMLDAVVDYLPSPEDVPSIVGFDPSDESVEIDRKPTMDDPFSALVFKISTHPFYGKLVFVRVYSGSVKPGDNVLDSTKGKKERVGKIFQMHADKENPVDAAEAGNIYTFVGLKNVTTGDTLCDEKHPISLESMTFPDPVIEVAVEPKTKADQEKMSLALAKLSDEDPTFQVKTDEESGQTLISGMGELQLDIIVDRMRREFKVECNVGKPQVAYRETIRKAVMNQEYTHKKQTGGSGQFAKVLMNFEPLDTENGEVYEFVNEVTGGHITKEFIPSIDAGVQEAMESGILAGFPVVGVKATVTDGQVHDVDSSEMAFKIAGSMCFKEAAPKAKPVILEPIMAVEVRTPEEYMGDVMGDLNSRRGSIQSMNDATGVKVIDAKVPLSEMFGYIGDLRSKTQGRAMFTMQMDSYAEVPKAVADEIIKAQRGE.

One can recognise a tr-type G domain in the interval 10–295; the sequence is NQVRNIGIMA…AVVDYLPSPE (286 aa). GTP contacts are provided by residues 19–26, 91–95, and 145–148; these read AHIDAGKT, DTPGH, and NKMD.

This sequence belongs to the TRAFAC class translation factor GTPase superfamily. Classic translation factor GTPase family. EF-G/EF-2 subfamily.

The protein localises to the cytoplasm. In terms of biological role, catalyzes the GTP-dependent ribosomal translocation step during translation elongation. During this step, the ribosome changes from the pre-translocational (PRE) to the post-translocational (POST) state as the newly formed A-site-bound peptidyl-tRNA and P-site-bound deacylated tRNA move to the P and E sites, respectively. Catalyzes the coordinated movement of the two tRNA molecules, the mRNA and conformational changes in the ribosome. This is Elongation factor G from Bifidobacterium animalis subsp. lactis (strain AD011).